An 80-amino-acid polypeptide reads, in one-letter code: Sec-independent protein translocase protein TatA (80 aa).

Residues 1 to 21 form a helical membrane-spanning segment; the sequence is MGISMWQLLIVLLIIVLLFGT. Positions 39–80 are disordered; the sequence is KKAMSDGESEEDKEPKKLSQNESRTIEGSVERNDAKTESKHS. Over residues 67 to 80 the composition is skewed to basic and acidic residues; that stretch reads SVERNDAKTESKHS.

This sequence belongs to the TatA/E family. The Tat system comprises two distinct complexes: a TatABC complex, containing multiple copies of TatA, TatB and TatC subunits, and a separate TatA complex, containing only TatA subunits. Substrates initially bind to the TatABC complex, which probably triggers association of the separate TatA complex to form the active translocon.

The protein resides in the cell inner membrane. Functionally, part of the twin-arginine translocation (Tat) system that transports large folded proteins containing a characteristic twin-arginine motif in their signal peptide across membranes. TatA could form the protein-conducting channel of the Tat system. The polypeptide is Sec-independent protein translocase protein TatA (Hahella chejuensis (strain KCTC 2396)).